The primary structure comprises 428 residues: Spliceosome RNA helicase DDX39B (428 aa).

Positions Met1–Glu19 are enriched in acidic residues. Residues Met1–Lys32 are disordered. At Ala2 the chain carries N-acetylalanine. Position 36 is an N6-acetyllysine; alternate (Lys36). A Glycyl lysine isopeptide (Lys-Gly) (interchain with G-Cter in SUMO2); alternate cross-link involves residue Lys36. Phosphoserine occurs at positions 38 and 41. Residues Ser45–His73 carry the Q motif motif. The region spanning Ile76–Ile249 is the Helicase ATP-binding domain. An ATP-binding site is contributed by Ala89 to Thr96. Thr172 bears the Phosphothreonine mark. Residues Asp196–Asp199 carry the DECD box motif. A Helicase C-terminal domain is found at Gly261 to Ser422.

It belongs to the DEAD box helicase family. DECD subfamily. Homodimer, and heterodimer with DDX39A. DDX39B interacts with the THO subcomplex to form the THO-DDX39B complex which multimerizes into a 28-subunit tetrameric assembly. Component of the transcription/export (TREX) complex at least composed of ALYREF/THOC4, DDX39B, SARNP/CIP29, CHTOP and the THO subcomplex; in the complex interacts with THOC2. THOC1-THOC2-THOC3-DDX39B subcomplex is sufficient for the interaction with export factor NXF1-NXT1. TREX seems to have a dynamic structure involving ATP-dependent remodeling. Within the TREX complex bridges ALYREF/THOC4 and the THO subcomplex, and, in a ATP-dependent manner, ALYREF/THOC4 and SARNP/CIP29. Component of the spliceosome. Interacts directly with U2AF2. Interacts with RBM8A, RNPS1 and SRRM1, FYTTD1/UIF, THOC1, MX1 and POLDIP3. Interacts with LUZP4. Interacts with SARNP/CIP29 (via the C-terminal domain); the interaction is direct and facilitates RNA binding of DDX39B.

Its subcellular location is the nucleus. It localises to the nucleus speckle. It is found in the cytoplasm. The enzyme catalyses ATP + H2O = ADP + phosphate + H(+). Functionally, involved in nuclear export of spliced and unspliced mRNA. Component of the TREX complex which is thought to couple mRNA transcription, processing and nuclear export, and specifically associates with spliced mRNA and not with unspliced pre-mRNA. The TREX complex is recruited to spliced mRNAs by a transcription-independent mechanism, binds to mRNA upstream of the exon-junction complex (EJC) and is recruited in a splicing- and cap-dependent manner to a region near the 5' end of the mRNA where it functions in mRNA export to the cytoplasm via the TAP/NXF1 pathway. The THOC1-THOC2-THOC3 core complex alone is sufficient to promote ATPase activity of DDX39B; in the complex THOC2 is the only component that directly interacts with DDX39B. Associates with SARNP/CIP29, which facilitates RNA binding of DDX39B and likely plays a role in mRNA export. May undergo several rounds of ATP hydrolysis during assembly of TREX to drive subsequent loading of components such as ALYREF/THOC4 and CHTOP onto mRNA. Also associates with pre-mRNA independent of ALYREF/THOC4. Involved in the nuclear export of intronless mRNA; the ATP-bound form is proposed to recruit export adapter ALYREF/THOC4 to intronless mRNA; its ATPase activity is cooperatively stimulated by RNA and ALYREF/THOC4 and ATP hydrolysis is thought to trigger the dissociation from RNA to allow the association of ALYREF/THOC4 and the NXF1-NXT1 heterodimer. Involved in transcription elongation and genome stability. In terms of biological role, splice factor that is required for the first ATP-dependent step in spliceosome assembly and for the interaction of U2 snRNP with the branchpoint. Has both RNA-stimulated ATP binding/hydrolysis activity and ATP-dependent RNA unwinding activity. Even with the stimulation of RNA, the ATPase activity is weak. Can only hydrolyze ATP but not other NTPs. The RNA stimulation of ATPase activity does not have a strong preference for the sequence and length of the RNA. However, ssRNA stimulates the ATPase activity much more strongly than dsRNA. Can unwind 5' or 3' overhangs or blunt end RNA duplexes in vitro. The ATPase and helicase activities are not influenced by U2AF2; the effect of ALYREF/THOC4 is reported conflictingly. This is Spliceosome RNA helicase DDX39B (DDX39B) from Canis lupus familiaris (Dog).